A 347-amino-acid chain; its full sequence is Olfactory receptor 6J1 (347 aa).

Topologically, residues 1–24 (MGNWTAAVTEFVLLGFSLSREVEL) are extracellular. Asparagine 3 carries N-linked (GlcNAc...) asparagine glycosylation. A helical transmembrane segment spans residues 25–45 (LLLVLLLPTFLLTLLGNLLII). At 46–53 (STVLSCSR) the chain is on the cytoplasmic side. A helical membrane pass occupies residues 54–74 (LHTPMYFFLCNLSILDILFTS). At 75-98 (VISPKVLANLGSRDKTISFAGCIT) the chain is on the extracellular side. A disulfide bridge connects residues cysteine 96 and cysteine 188. A helical membrane pass occupies residues 99-119 (QCYFYFFLGTVEFLLLTVMSY). Residues 120 to 138 (DRYATICCPLRYTTIMRPS) are Cytoplasmic-facing. Residues 139–159 (VCIGTVVFSWVGGFLSVLFPT) traverse the membrane as a helical segment. The Extracellular segment spans residues 160 to 196 (ILISQLPFCGSNIINHFFCDSGPLLALACADTTAIEL). Residues 197 to 216 (MDFMLSSMVILCCIVLVAYS) form a helical membrane-spanning segment. Over 217-236 (YTYIILTIVRIPSASGRKKA) the chain is Cytoplasmic. A helical transmembrane segment spans residues 237 to 257 (FNTCASHLTIVIISSGITVFI). At 258 to 270 (YVTPSQKEYLEIN) the chain is on the extracellular side. A helical membrane pass occupies residues 271–291 (KIPLVLSSVVTPFLNPFIYTL). At 292 to 347 (RNDTVQGVLRDVWVRVRGVFEKRMRAVLRSRLSSNKDHQGRACSSPPCVYSVKLQC) the chain is on the cytoplasmic side.

This sequence belongs to the G-protein coupled receptor 1 family.

It localises to the cell membrane. Odorant receptor. In Homo sapiens (Human), this protein is Olfactory receptor 6J1 (OR6J1).